Here is a 244-residue protein sequence, read N- to C-terminus: Carboxy-S-adenosyl-L-methionine synthase (244 aa).

S-adenosyl-L-methionine-binding positions include tyrosine 41, 66-68 (GCS), 91-92 (DN), asparagine 134, and arginine 201.

The protein belongs to the class I-like SAM-binding methyltransferase superfamily. Cx-SAM synthase family. As to quaternary structure, homodimer.

The enzyme catalyses prephenate + S-adenosyl-L-methionine = carboxy-S-adenosyl-L-methionine + 3-phenylpyruvate + H2O. In terms of biological role, catalyzes the conversion of S-adenosyl-L-methionine (SAM) to carboxy-S-adenosyl-L-methionine (Cx-SAM). The polypeptide is Carboxy-S-adenosyl-L-methionine synthase (Colwellia psychrerythraea (strain 34H / ATCC BAA-681) (Vibrio psychroerythus)).